A 549-amino-acid polypeptide reads, in one-letter code: Elongator complex protein 3 (549 aa).

A Radical SAM core domain is found at 84–374; that stretch reads RTASGIAVVA…YRVQRDIPMP (291 aa). [4Fe-4S] cluster-binding residues include C101, C111, and C114. Residues K166, 476–479, 499–501, and Y532 contribute to the acetyl-CoA site; these read ELHV and FGM. The N-acetyltransferase domain maps to 398–549; it reads TECRDVRTRE…EGPYMVKKLD (152 aa).

The protein belongs to the ELP3 family. In terms of assembly, component of the elongator complex. Interacts with transcriptional repressors snai1 and snai2; interaction with snai1 inhibits its ubiquitination and stabilizes it. Requires [4Fe-4S] cluster as cofactor.

The protein resides in the cytoplasm. It is found in the nucleus. It carries out the reaction uridine(34) in tRNA + acetyl-CoA + S-adenosyl-L-methionine + H2O = 5-(carboxymethyl)uridine(34) in tRNA + 5'-deoxyadenosine + L-methionine + CoA + 2 H(+). The protein operates within tRNA modification; 5-methoxycarbonylmethyl-2-thiouridine-tRNA biosynthesis. Catalytic tRNA acetyltransferase subunit of the elongator complex which is required for multiple tRNA modifications, including mcm5U (5-methoxycarbonylmethyl uridine), mcm5s2U (5-methoxycarbonylmethyl-2-thiouridine), and ncm5U (5-carbamoylmethyl uridine). In the elongator complex, acts as a tRNA uridine(34) acetyltransferase by mediating formation of carboxymethyluridine in the wobble base at position 34 in tRNAs. Stabilizes transcriptional repressor snai1 by inhibiting its ubiquitination which promotes neural crest cell migration. The protein is Elongator complex protein 3 of Xenopus tropicalis (Western clawed frog).